The following is a 118-amino-acid chain: NADH-ubiquinone oxidoreductase chain 3 (118 aa).

A run of 3 helical transmembrane segments spans residues 6-26 (IFVY…VSFL), 62-82 (LVSI…PWAV), and 87-107 (IGLF…IGFV).

This sequence belongs to the complex I subunit 3 family.

The protein localises to the mitochondrion membrane. The catalysed reaction is a ubiquinone + NADH + 5 H(+)(in) = a ubiquinol + NAD(+) + 4 H(+)(out). Its function is as follows. Core subunit of the mitochondrial membrane respiratory chain NADH dehydrogenase (Complex I) that is believed to belong to the minimal assembly required for catalysis. Complex I functions in the transfer of electrons from NADH to the respiratory chain. The immediate electron acceptor for the enzyme is believed to be ubiquinone. This Marchantia polymorpha (Common liverwort) protein is NADH-ubiquinone oxidoreductase chain 3 (ND3).